Reading from the N-terminus, the 383-residue chain is Dephospho-CoA kinase (383 aa).

The region spanning arginine 3–leucine 201 is the DPCK domain. An ATP-binding site is contributed by glycine 11 to threonine 16. The segment at proline 196–valine 383 is UPF0157.

It in the N-terminal section; belongs to the CoaE family. In the C-terminal section; belongs to the UPF0157 (GrpB) family.

It localises to the cytoplasm. It carries out the reaction 3'-dephospho-CoA + ATP = ADP + CoA + H(+). It functions in the pathway cofactor biosynthesis; coenzyme A biosynthesis; CoA from (R)-pantothenate: step 5/5. Catalyzes the phosphorylation of the 3'-hydroxyl group of dephosphocoenzyme A to form coenzyme A. This is Dephospho-CoA kinase from Nocardia farcinica (strain IFM 10152).